The following is a 122-amino-acid chain: Glycine cleavage system H protein (122 aa).

The 83-residue stretch at 19 to 101 (VVTVGITNYA…EKEGWLWKMT (83 aa)) folds into the Lipoyl-binding domain. Position 60 is an N6-lipoyllysine (Lys60).

Belongs to the GcvH family. In terms of assembly, the glycine cleavage system is composed of four proteins: P, T, L and H. (R)-lipoate is required as a cofactor.

Its function is as follows. The glycine cleavage system catalyzes the degradation of glycine. The H protein shuttles the methylamine group of glycine from the P protein to the T protein. The sequence is that of Glycine cleavage system H protein from Bartonella quintana (strain Toulouse) (Rochalimaea quintana).